The sequence spans 175 residues: Flagellar assembly factor FliW (175 aa).

This sequence belongs to the FliW family. As to quaternary structure, interacts with translational regulator CsrA and flagellin(s).

The protein localises to the cytoplasm. In terms of biological role, acts as an anti-CsrA protein, binds CsrA and prevents it from repressing translation of its target genes, one of which is flagellin. Binds to flagellin and participates in the assembly of the flagellum. The chain is Flagellar assembly factor FliW from Bdellovibrio bacteriovorus (strain ATCC 15356 / DSM 50701 / NCIMB 9529 / HD100).